We begin with the raw amino-acid sequence, 101 residues long: MDISKAPNPRKLELCRKYFFAGFAFLPFVWAINVCWFFTEAFHKPPFSEQSQIKRYVIYSAVGTLFWLIVLTAWIIIFQTNRTAWGATADYMSFIIPLGSA.

At 1 to 17 (MDISKAPNPRKLELCRK) the chain is on the lumenal side. A helical transmembrane segment spans residues 18–38 (YFFAGFAFLPFVWAINVCWFF). Topologically, residues 39-57 (TEAFHKPPFSEQSQIKRYV) are cytoplasmic. Residues 58-78 (IYSAVGTLFWLIVLTAWIIIF) traverse the membrane as a helical segment. Over 79 to 101 (QTNRTAWGATADYMSFIIPLGSA) the chain is Lumenal.

It belongs to the PEN-2 family. In terms of assembly, component of the gamma-secretase complex, a complex composed of a presenilin (Psn) homodimer, nicastrin (Nct), Aph-1 and Pen-2.

Its subcellular location is the membrane. Functionally, essential subunit of the gamma-secretase complex, an endoprotease complex that catalyzes the intramembrane cleavage of integral membrane proteins such as Notch. It probably represents the last step of maturation of gamma-secretase, facilitating endoproteolysis of presenilin and conferring gamma-secretase activity. The polypeptide is Gamma-secretase subunit pen-2 (pen-2) (Drosophila melanogaster (Fruit fly)).